Here is a 317-residue protein sequence, read N- to C-terminus: Large ribosomal subunit protein uL10z (317 aa).

The protein belongs to the universal ribosomal protein uL10 family. In terms of assembly, P0 forms a pentameric complex by interaction with dimers of P1 and P2. In terms of processing, phosphorylated.

In terms of biological role, ribosomal protein P0 is the functional equivalent of E.coli protein L10. In Arabidopsis thaliana (Mouse-ear cress), this protein is Large ribosomal subunit protein uL10z (RPP0A).